Reading from the N-terminus, the 329-residue chain is Probable cell division protein WhiA (329 aa).

Residues Ser275–Gln308 constitute a DNA-binding region (H-T-H motif).

It belongs to the WhiA family.

Its function is as follows. Involved in cell division and chromosome segregation. The sequence is that of Probable cell division protein WhiA from Streptomyces griseus subsp. griseus (strain JCM 4626 / CBS 651.72 / NBRC 13350 / KCC S-0626 / ISP 5235).